The primary structure comprises 414 residues: NFATC2-interacting protein (414 aa).

The interval 1–42 is disordered; sequence MAEPLRRRGPRSRGGRASRGARRARAARGRCPRAPRSPTRLI. Residues 7-33 are compositionally biased toward basic residues; that stretch reads RRGPRSRGGRASRGARRARAARGRCPR. 2 positions are modified to phosphoserine: serine 52 and serine 54. Residues 63-118 form a disordered region; sequence ADPGEVPVARLPAPAAPEQDSDSDSEGAAEGPAGAPRTLVRRRRRLLDPGEAPVVP. A compositionally biased stretch (low complexity) spans 68-79; that stretch reads VPVARLPAPAAP. A phosphoserine mark is found at serine 83, serine 85, and serine 87. Positions 90–100 are enriched in low complexity; sequence AAEGPAGAPRT. A Phosphoserine modification is found at serine 121. Lysine 123 is covalently cross-linked (Glycyl lysine isopeptide (Lys-Gly) (interchain with G-Cter in SUMO2)). The tract at residues 139–208 is disordered; the sequence is KLCPSEPEDE…SSRNKSRKHT (70 aa). A coiled-coil region spans residues 170–229; the sequence is KKKLRKKHEKEEKKMEEFPDQDISPLPQPSSRNKSRKHTEALQKLREVNKRLQDLRSCLS. 3 positions are modified to phosphoserine: serine 193, serine 199, and serine 309. Phosphothreonine is present on residues threonine 311 and threonine 313. A Ubiquitin-like domain is found at 343–414; the sequence is LRLRVQGKEK…ESGDLIEVWG (72 aa). A phosphoserine mark is found at serine 364 and serine 385.

In terms of assembly, interacts with NFATC2, TRAF1, TRAF2 and PRMT1. Interacts with UBE2I/UBC9. Post-translationally, methylation at the N-terminus by PRMT1 modulates interaction with the NFAT complex and results in augmented cytokine production.

It is found in the nucleus. The protein resides in the cytoplasm. Functionally, in T-helper 2 (Th2) cells, regulates the magnitude of NFAT-driven transcription of a specific subset of cytokine genes, including IL3, IL4, IL5 and IL13, but not IL2. Recruits PRMT1 to the IL4 promoter; this leads to enhancement of histone H4 'Arg-3'-methylation and facilitates subsequent histone acetylation at the IL4 locus, thus promotes robust cytokine expression. Down-regulates formation of poly-SUMO chains by UBE2I/UBC9. This Rattus norvegicus (Rat) protein is NFATC2-interacting protein (Nfatc2ip).